The sequence spans 734 residues: MATKFPKFSQGLAQDPTTRRIWFGIATAHDFESHDGITEESLYQKIFASHFGQLAIIFLWTSGNLFHVAWQGNFEQWTKDPLHVRPIAHAIWDPHFGQPAVEAFTRGGASNPVNIAYSGVYQWWYTIGLRTNNDLYTGALFLLIVSAVALFAGWLHLQPKFQPSLSWFKNAESRLNHHLSGLFGVSSLAWTGHLVHVAIPESRGQHVGWDNFLSVLPHPQGLGPFFTGSWGVYAQNPDSTSHLFNTSEGAGTAILTFLGGFHPQTQSLWLTDIAHHHLAIAVLFIIAGHMYRTNFGIGHSMKEILDSHVPPAGGLGAGHKGLYDTVNNSLHFQLGLALASLGVVTSLVAQHMYSLPPYAFLAQDFTTQAALYTHHQYIAGFIMTGAFAHGAIFFVRDYDPELNKDNVLARMLEHKEAIISHLSWASLFLGFHTLGLYVHNDVMQAFGTPEKQILIEPVFAQWIQSAHGKALYGFDVLLSSANSPASSASQSIWLPGWLDAINNNTNSLFLTIGPGDFLVHHAIALGLHTTTLILVKGALDARGSKLMPDKKDFGYAFPCDGPGRGGTCDISAWDAFYLAVFWMLNTIGWVTFYWHWKHLTLWQGNVAQFNESSTYLMGWLRDYLWLNSSQLINGYNPFGMNSLSVWAWMFLFGHLVWATGFMFLISWRGYWQELIETLAWAHERTPLANLVRWKDKPVALSIVQARLVGLAHFSVGYVLTYAAFLIASTSGKFG.

A run of 8 helical transmembrane segments spans residues 46-69 (IFAS…FHVA), 135-158 (LYTG…LHLQ), 175-199 (LNHH…HVAI), 273-291 (IAHH…GHMY), 330-353 (LHFQ…QHMY), 369-395 (AALY…IFFV), 417-439 (AIIS…LYVH), and 517-535 (FLVH…LILV). [4Fe-4S] cluster contacts are provided by Cys559 and Cys568. Helical transmembrane passes span 575-596 (AFYL…YWHW) and 643-665 (LSVW…MFLI). The chlorophyll a site is built by His654, Met662, and Tyr670. Position 671 (Trp671) interacts with phylloquinone. The chain crosses the membrane as a helical span at residues 707 to 727 (LVGLAHFSVGYVLTYAAFLIA).

It belongs to the PsaA/PsaB family. As to quaternary structure, the PsaA/B heterodimer binds the P700 chlorophyll special pair and subsequent electron acceptors. PSI consists of a core antenna complex that captures photons, and an electron transfer chain that converts photonic excitation into a charge separation. The eukaryotic PSI reaction center is composed of at least 11 subunits. P700 is a chlorophyll a/chlorophyll a' dimer, A0 is one or more chlorophyll a, A1 is one or both phylloquinones and FX is a shared 4Fe-4S iron-sulfur center. is required as a cofactor.

The protein localises to the plastid. It localises to the chloroplast thylakoid membrane. The enzyme catalyses reduced [plastocyanin] + hnu + oxidized [2Fe-2S]-[ferredoxin] = oxidized [plastocyanin] + reduced [2Fe-2S]-[ferredoxin]. Functionally, psaA and PsaB bind P700, the primary electron donor of photosystem I (PSI), as well as the electron acceptors A0, A1 and FX. PSI is a plastocyanin-ferredoxin oxidoreductase, converting photonic excitation into a charge separation, which transfers an electron from the donor P700 chlorophyll pair to the spectroscopically characterized acceptors A0, A1, FX, FA and FB in turn. Oxidized P700 is reduced on the lumenal side of the thylakoid membrane by plastocyanin. The sequence is that of Photosystem I P700 chlorophyll a apoprotein A2 from Chlorokybus atmophyticus (Soil alga).